A 182-amino-acid chain; its full sequence is uncharacterized protein (182 aa).

Residues 1 to 23 show a composition bias toward polar residues; that stretch reads MILSDQNFLQTQWKEPQTAQSKN. Residues 1–33 are disordered; the sequence is MILSDQNFLQTQWKEPQTAQSKNTESKCEFHGN.

It belongs to the peptidase M24 family.

This is an uncharacterized protein from Caenorhabditis elegans.